Consider the following 861-residue polypeptide: Isoleucine--tRNA ligase (861 aa).

A 'HIGH' region motif is present at residues 57 to 67 (PYANGNIHVGH). Glu-549 serves as a coordination point for L-isoleucyl-5'-AMP. The 'KMSKS' region motif lies at 590 to 594 (KMSKS). Lys-593 is an ATP binding site.

This sequence belongs to the class-I aminoacyl-tRNA synthetase family. IleS type 1 subfamily. As to quaternary structure, monomer.

The protein resides in the cytoplasm. The catalysed reaction is tRNA(Ile) + L-isoleucine + ATP = L-isoleucyl-tRNA(Ile) + AMP + diphosphate. Catalyzes the attachment of isoleucine to tRNA(Ile). As IleRS can inadvertently accommodate and process structurally similar amino acids such as valine, to avoid such errors it has two additional distinct tRNA(Ile)-dependent editing activities. One activity is designated as 'pretransfer' editing and involves the hydrolysis of activated Val-AMP. The other activity is designated 'posttransfer' editing and involves deacylation of mischarged Val-tRNA(Ile). This chain is Isoleucine--tRNA ligase, found in Mycoplasma pneumoniae (strain ATCC 29342 / M129 / Subtype 1) (Mycoplasmoides pneumoniae).